The chain runs to 791 residues: Nuclear cap-binding protein subunit 1-B (791 aa).

The disordered stretch occupies residues 1–24 (MSRRRHSDENDGGQPHKRRRTSEP). The 213-residue stretch at 28-240 (EDRLESLICR…CLWAQVQKLK (213 aa)) folds into the MIF4G domain. A coiled-coil region spans residues 641 to 714 (LHSTIRKMNK…SEQKNLFLVI (74 aa)). The interval 664 to 687 (QRLAKQHKHRDSDDNDEDSGRKDG) is disordered.

This sequence belongs to the NCBP1 family. Component of the nuclear cap-binding complex (CBC), a heterodimer composed of ncbp1/cbp80 and ncbp2/cbp20 that interacts with m7GpppG-capped RNA. Component of an alternative nuclear cap-binding complex (CBC) composed of ncbp1/cbp80 and ncbp3.

It localises to the nucleus. Its subcellular location is the cytoplasm. In terms of biological role, component of the cap-binding complex (CBC), which binds cotranscriptionally to the 5'-cap of pre-mRNAs and is involved in various processes such as pre-mRNA splicing, translation regulation, nonsense-mediated mRNA decay, RNA-mediated gene silencing (RNAi) by microRNAs (miRNAs) and mRNA export. The CBC complex is involved in mRNA export from the nucleus, leading to the recruitment of the mRNA export machinery to the 5'-end of mRNA and to mRNA export in a 5' to 3' direction through the nuclear pore. The CBC complex is also involved in mediating U snRNA and intronless mRNAs export from the nucleus. The CBC complex is essential for a pioneer round of mRNA translation, before steady state translation when the CBC complex is replaced by cytoplasmic cap-binding protein eIF4E. The pioneer round of mRNA translation mediated by the CBC complex plays a central role in nonsense-mediated mRNA decay (NMD), NMD only taking place in mRNAs bound to the CBC complex, but not on eIF4E-bound mRNAs. The CBC complex enhances NMD in mRNAs containing at least one exon-junction complex (EJC), promoting the interaction between UPF1 and UPF2. The CBC complex is also involved in 'failsafe' NMD, which is independent of the EJC complex, while it does not participate in Staufen-mediated mRNA decay (SMD). During cell proliferation, the CBC complex is also involved in microRNAs (miRNAs) biogenesis via its interaction with SRRT/ARS2 and is required for miRNA-mediated RNA interference. The CBC complex also acts as a negative regulator of parn, thereby acting as an inhibitor of mRNA deadenylation. In the CBC complex, NCBP1/CBP80 does not bind directly capped RNAs (m7GpppG-capped RNA) but is required to stabilize the movement of the N-terminal loop of NCBP2/CBP20 and lock the CBC into a high affinity cap-binding state with the cap structure. Associates with NCBP3 to form an alternative cap-binding complex (CBC) which plays a key role in mRNA export. The conventional CBC with NCBP2 binds both small nuclear RNA (snRNA) and messenger (mRNA) and is involved in their export from the nucleus whereas the alternative CBC with NCBP3 does not bind snRNA and associates only with mRNA thereby playing a role only in mRNA export. This is Nuclear cap-binding protein subunit 1-B (ncbp1-b) from Xenopus laevis (African clawed frog).